The primary structure comprises 344 residues: Dihydroorotate dehydrogenase (quinone) (344 aa).

Residues 61–65 and Thr-85 contribute to the FMN site; that span reads AGLDK. Position 65 (Lys-65) interacts with substrate. 110 to 114 is a substrate binding site; it reads NRMGF. FMN contacts are provided by Asn-138 and Asn-171. Asn-171 lines the substrate pocket. The active-site Nucleophile is Ser-174. Asn-176 is a binding site for substrate. Lys-216 and Thr-244 together coordinate FMN. A substrate-binding site is contributed by 245 to 246; that stretch reads NT. FMN contacts are provided by residues Gly-267, Gly-296, and 317-318; that span reads YS.

It belongs to the dihydroorotate dehydrogenase family. Type 2 subfamily. Monomer. The cofactor is FMN.

Its subcellular location is the cell membrane. It carries out the reaction (S)-dihydroorotate + a quinone = orotate + a quinol. It functions in the pathway pyrimidine metabolism; UMP biosynthesis via de novo pathway; orotate from (S)-dihydroorotate (quinone route): step 1/1. Its function is as follows. Catalyzes the conversion of dihydroorotate to orotate with quinone as electron acceptor. This is Dihydroorotate dehydrogenase (quinone) from Psychrobacter cryohalolentis (strain ATCC BAA-1226 / DSM 17306 / VKM B-2378 / K5).